The following is a 91-amino-acid chain: Small ribosomal subunit protein uS19 (91 aa).

Belongs to the universal ribosomal protein uS19 family.

Its function is as follows. Protein S19 forms a complex with S13 that binds strongly to the 16S ribosomal RNA. In Metamycoplasma hominis (strain ATCC 23114 / DSM 25592 / NBRC 14850 / NCTC 10111 / PG21) (Mycoplasma hominis), this protein is Small ribosomal subunit protein uS19.